The following is a 338-amino-acid chain: Ferrochelatase (338 aa).

Fe cation contacts are provided by histidine 189 and glutamate 293.

It belongs to the ferrochelatase family.

It is found in the cytoplasm. It carries out the reaction heme b + 2 H(+) = protoporphyrin IX + Fe(2+). The protein operates within porphyrin-containing compound metabolism; protoheme biosynthesis; protoheme from protoporphyrin-IX: step 1/1. Functionally, catalyzes the ferrous insertion into protoporphyrin IX. This is Ferrochelatase from Azotobacter vinelandii (strain DJ / ATCC BAA-1303).